Here is a 95-residue protein sequence, read N- to C-terminus: MSYTIAAEIRTEIGKGSSRRLRHANKVPAVIYGAGKEPISIKFDHKDIINIQENADFYSSDLTITVDGKDVKVRVQAMQRHAFKGLIEHIDFKFA.

This sequence belongs to the bacterial ribosomal protein bL25 family. As to quaternary structure, part of the 50S ribosomal subunit; part of the 5S rRNA/L5/L18/L25 subcomplex. Contacts the 5S rRNA. Binds to the 5S rRNA independently of L5 and L18.

This is one of the proteins that binds to the 5S RNA in the ribosome where it forms part of the central protuberance. This is Large ribosomal subunit protein bL25 from Shewanella sediminis (strain HAW-EB3).